Consider the following 191-residue polypeptide: ATP synthase subunit b 1 (191 aa).

Residues 7–25 (RMRILCLCATTLLMAGSAL) form a helical membrane-spanning segment.

Belongs to the ATPase B chain family. In terms of assembly, F-type ATPases have 2 components, F(1) - the catalytic core - and F(0) - the membrane proton channel. F(1) has five subunits: alpha(3), beta(3), gamma(1), delta(1), epsilon(1). F(0) has three main subunits: a(1), b(2) and c(10-14). The alpha and beta chains form an alternating ring which encloses part of the gamma chain. F(1) is attached to F(0) by a central stalk formed by the gamma and epsilon chains, while a peripheral stalk is formed by the delta and b chains.

Its subcellular location is the cell inner membrane. Functionally, f(1)F(0) ATP synthase produces ATP from ADP in the presence of a proton or sodium gradient. F-type ATPases consist of two structural domains, F(1) containing the extramembraneous catalytic core and F(0) containing the membrane proton channel, linked together by a central stalk and a peripheral stalk. During catalysis, ATP synthesis in the catalytic domain of F(1) is coupled via a rotary mechanism of the central stalk subunits to proton translocation. In terms of biological role, component of the F(0) channel, it forms part of the peripheral stalk, linking F(1) to F(0). The chain is ATP synthase subunit b 1 from Syntrophotalea carbinolica (strain DSM 2380 / NBRC 103641 / GraBd1) (Pelobacter carbinolicus).